The primary structure comprises 258 residues: Immediate-early protein IE-0 (258 aa).

Residues 191–237 form an RING-type zinc finger; sequence CNICEDSSAEEQFLKPNVCCGYRVCNACYAKLWEFCTGAYPVCPICK.

In Lymantria dispar multicapsid nuclear polyhedrosis virus (LdMNPV), this protein is Immediate-early protein IE-0 (IE-0).